A 160-amino-acid polypeptide reads, in one-letter code: MAKIVLCMVLLAFGRQVYGASLVPAPISEQDPELATCELQLSKYRRFILQAILSFEDVCDAYSSRPGGQDSDSEGWPFRHYAPPPTSQRGEIWAFFRLLMAQFGDKEFSPIIRDAVIERCRIKSQLQRDEKRNSVVLGKKQRFHSWGGKRSPEPPILPDY.

A signal peptide spans 1–19; sequence MAKIVLCMVLLAFGRQVYG. The propeptide occupies 20–130; that stretch reads ASLVPAPISE…RIKSQLQRDE (111 aa). G147 is modified (glycine amide). Residues 151-160 constitute a propeptide that is removed on maturation; it reads SPEPPILPDY.

Its subcellular location is the secreted. Acts through intracellular calcium in Malpighian tubule stellate cells to raise chloride conductance. The chain is Leucokinin (Lk) from Drosophila melanogaster (Fruit fly).